Reading from the N-terminus, the 780-residue chain is ATP-dependent 6-phosphofructokinase, muscle type (780 aa).

Position 2 is an N-acetylthreonine (T2). Residues 2–390 (THEEHHAAKS…NWEVYKLLAH (389 aa)) form an N-terminal catalytic PFK domain 1 region. Residues G25, 88-89 (RC), and 118-121 (GDGS) contribute to the ATP site. Residue D119 participates in Mg(2+) binding. Substrate-binding positions include 164-166 (SID), R201, 208-210 (MGR), E264, R292, and 298-301 (HVQR). D166 functions as the Proton acceptor in the catalytic mechanism. A Phosphoserine modification is found at S377. The segment at 391 to 401 (VRPPVTKSGSY) is interdomain linker. Positions 402-780 (TVAVMNVGAP…TRKRSGEATI (379 aa)) are C-terminal regulatory PFK domain 2. Residues R471 and 528 to 532 (TVSNN) each bind beta-D-fructose 2,6-bisphosphate. O-linked (GlcNAc) serine glycosylation is present at S530. An N6-(2-hydroxyisobutyryl)lysine modification is found at K557. Residues R566, 573–575 (MGG), E629, R655, and 661–664 (HMQQ) contribute to the beta-D-fructose 2,6-bisphosphate site. S667 carries the phosphoserine modification. A beta-D-fructose 2,6-bisphosphate-binding site is contributed by R735. S775 carries the post-translational modification Phosphoserine.

It belongs to the phosphofructokinase type A (PFKA) family. ATP-dependent PFK group I subfamily. Eukaryotic two domain clade 'E' sub-subfamily. As to quaternary structure, homo- and heterotetramers. Phosphofructokinase (PFK) enzyme functions as a tetramer composed of different combinations of 3 types of subunits, called PFKM (M), PFKL (L) and PFKP (P). The composition of the PFK tetramer differs according to the tissue type it is present in. The kinetic and regulatory properties of the tetrameric enzyme are dependent on the subunit composition, hence can vary across tissues. Interacts (via C-terminus) with HK1 (via N-terminal spermatogenic cell-specific region). Mg(2+) serves as cofactor. Post-translationally, glcNAcylation decreases enzyme activity.

It localises to the cytoplasm. The catalysed reaction is beta-D-fructose 6-phosphate + ATP = beta-D-fructose 1,6-bisphosphate + ADP + H(+). Its pathway is carbohydrate degradation; glycolysis; D-glyceraldehyde 3-phosphate and glycerone phosphate from D-glucose: step 3/4. Its activity is regulated as follows. Allosterically activated by ADP, AMP, or fructose 2,6-bisphosphate, and allosterically inhibited by ATP or citrate. Its function is as follows. Catalyzes the phosphorylation of D-fructose 6-phosphate to fructose 1,6-bisphosphate by ATP, the first committing step of glycolysis. The chain is ATP-dependent 6-phosphofructokinase, muscle type (PFKM) from Sus scrofa (Pig).